The following is a 197-amino-acid chain: DnaJ homolog subfamily C member 5 (197 aa).

In terms of domain architecture, J spans 13–82; sequence GESLYHVLGL…RNIYDKYGSL (70 aa). Residues 153 to 197 form a disordered region; it reads EDLEAQMQSDERDTEGPVLVQPASATETTQLTSDSHASYHTDGFN. Over residues 175 to 197 the composition is skewed to polar residues; it reads ASATETTQLTSDSHASYHTDGFN.

Palmitoylated. Palmitoylation occurs probably in the cysteine-rich domain and regulates DNAJC5 stable membrane attachment.

The protein localises to the cytoplasm. The protein resides in the cytosol. It localises to the membrane. It is found in the cytoplasmic vesicle. Its subcellular location is the secretory vesicle. The protein localises to the chromaffin granule membrane. The protein resides in the melanosome. It localises to the cell membrane. May have an important role in presynaptic function. May be involved in calcium-dependent neurotransmitter release at nerve endings. The sequence is that of DnaJ homolog subfamily C member 5 from Xenopus laevis (African clawed frog).